A 33-amino-acid polypeptide reads, in one-letter code: MSDIN-like toxin proprotein 1 (33 aa).

A propeptide spanning residues 1 to 10 (MSDINATRLP) is cleaved from the precursor. A cross-link (cyclopeptide (Ile-Pro)) is located at residues 11–18 (IIWAPVVP). Residues 19–33 (CISDDNDSTLTRGQR) constitute a propeptide that is removed on maturation.

Belongs to the MSDIN fungal toxin family. Processed by the macrocyclase-peptidase enzyme POPB to yield a toxic cyclic octapeptide. POPB first removes 10 residues from the N-terminus. Conformational trapping of the remaining peptide forces the enzyme to release this intermediate rather than proceed to macrocyclization. The enzyme rebinds the remaining peptide in a different conformation and catalyzes macrocyclization of the N-terminal 8 residues.

Probable toxin that belongs to the MSDIN-like toxin family responsible for a large number of food poisoning cases and deaths. The protein is MSDIN-like toxin proprotein 1 of Amanita fuliginea (East Asian brown death cap).